The primary structure comprises 451 residues: UDP-glycosyltransferase 13 (451 aa).

His-15 acts as the Proton acceptor in catalysis. His-15 serves as a coordination point for an anthocyanidin. Asp-93 functions as the Charge relay in the catalytic mechanism. UDP-alpha-D-glucose-binding residues include Ala-326, Gln-328, His-343, Trp-346, Asn-347, Ser-348, and Glu-351. Ala-366 provides a ligand contact to an anthocyanidin. UDP-alpha-D-glucose-binding residues include Glu-367 and Gln-368.

The protein belongs to the UDP-glycosyltransferase family. Expressed in roots. Detected in stems and leaves.

It carries out the reaction a 7-hydroxyisoflavone + UDP-alpha-D-glucose = a 7-hydroxyisoflavone 7-O-beta-D-glucoside + UDP + H(+). Isoflavone 7-O-glucosyltransferase converting daidzein to daidzin, genistein to genistin and formononetin to ononin. Shows some activity toward the flavanones liquiritigenin and naringenin, but not toward cyanidin, isoliquiritigenin, apigenin, luteolin, kaempferol, quercetin, daidzin and puerarin. The protein is UDP-glycosyltransferase 13 of Pueraria montana var. lobata (Kudzu vine).